Reading from the N-terminus, the 553-residue chain is Fusion glycoprotein F0 (553 aa).

An N-terminal signal peptide occupies residues 1 to 31; that stretch reads MGSRSSTRIPVPLMLTVRVMLALSCVCPTSA. Over 32-500 the chain is Extracellular; sequence LDGRPLAAAG…VNVKLTSTSA (469 aa). Cystine bridges form between Cys-76–Cys-199, Cys-362–Cys-370, Cys-394–Cys-399, and Cys-401–Cys-424. N-linked (GlcNAc...) asparagine; by host glycosylation is present at Asn-85. Residues 117–141 form a fusion peptide region; sequence LIGAIIGGVALGVATAAQITAASAL. Residues 142–170 adopt a coiled-coil conformation; the sequence is IQANQNAANILLLKESIAATNEAVHEVTN. Asn-191 and Asn-366 each carry an N-linked (GlcNAc...) asparagine; by host glycan. Residues Asn-447 and Asn-471 are each glycosylated (N-linked (GlcNAc...) asparagine; by host). Residues 466-491 adopt a coiled-coil conformation; that stretch reads ELGNVNNSISNALDKLEESNSKLDKV. The chain crosses the membrane as a helical span at residues 501–521; sequence LITYIVLTVISLVCGILSLVL. The Cytoplasmic portion of the chain corresponds to 522 to 553; that stretch reads ACYLMYKQKAQQKTLLWLGNNTLDQMRATTKM. Cys-523 is lipidated: S-palmitoyl cysteine; by host.

This sequence belongs to the paramyxoviruses fusion glycoprotein family. Homotrimer of disulfide-linked F1-F2. The inactive precursor F0 is glycosylated and proteolytically cleaved into F1 and F2 to be functionally active. The cleavage is mediated by cellular proteases during the transport and maturation of the polypeptide.

The protein resides in the virion membrane. It localises to the host cell membrane. Class I viral fusion protein. Under the current model, the protein has at least 3 conformational states: pre-fusion native state, pre-hairpin intermediate state, and post-fusion hairpin state. During viral and plasma cell membrane fusion, the heptad repeat (HR) regions assume a trimer-of-hairpins structure, positioning the fusion peptide in close proximity to the C-terminal region of the ectodomain. The formation of this structure appears to drive apposition and subsequent fusion of viral and plasma cell membranes. Directs fusion of viral and cellular membranes leading to delivery of the nucleocapsid into the cytoplasm. This fusion is pH independent and occurs directly at the outer cell membrane. The trimer of F1-F2 (F protein) probably interacts with HN at the virion surface. Upon HN binding to its cellular receptor, the hydrophobic fusion peptide is unmasked and interacts with the cellular membrane, inducing the fusion between cell and virion membranes. Later in infection, F proteins expressed at the plasma membrane of infected cells could mediate fusion with adjacent cells to form syncytia, a cytopathic effect that could lead to tissue necrosis. The chain is Fusion glycoprotein F0 (F) from Newcastle disease virus (strain Queensland/66) (NDV).